A 67-amino-acid chain; its full sequence is Large ribosomal subunit protein bL35 (67 aa).

It belongs to the bacterial ribosomal protein bL35 family.

In Allorhizobium ampelinum (strain ATCC BAA-846 / DSM 112012 / S4) (Agrobacterium vitis (strain S4)), this protein is Large ribosomal subunit protein bL35.